Consider the following 426-residue polypeptide: Serine--tRNA ligase (426 aa).

Residue 231 to 233 coordinates L-serine; sequence TSE. ATP is bound at residue 262–264; sequence RSE. L-serine is bound at residue Glu-285. 349-352 provides a ligand contact to ATP; that stretch reads EISS. Ser-385 lines the L-serine pocket.

This sequence belongs to the class-II aminoacyl-tRNA synthetase family. Type-1 seryl-tRNA synthetase subfamily. In terms of assembly, homodimer. The tRNA molecule binds across the dimer.

It localises to the cytoplasm. It carries out the reaction tRNA(Ser) + L-serine + ATP = L-seryl-tRNA(Ser) + AMP + diphosphate + H(+). The catalysed reaction is tRNA(Sec) + L-serine + ATP = L-seryl-tRNA(Sec) + AMP + diphosphate + H(+). It participates in aminoacyl-tRNA biosynthesis; selenocysteinyl-tRNA(Sec) biosynthesis; L-seryl-tRNA(Sec) from L-serine and tRNA(Sec): step 1/1. Catalyzes the attachment of serine to tRNA(Ser). Is also able to aminoacylate tRNA(Sec) with serine, to form the misacylated tRNA L-seryl-tRNA(Sec), which will be further converted into selenocysteinyl-tRNA(Sec). The chain is Serine--tRNA ligase from Legionella pneumophila (strain Lens).